The following is a 178-amino-acid chain: Large ribosomal subunit protein uL5 (178 aa).

This sequence belongs to the universal ribosomal protein uL5 family. As to quaternary structure, part of the 50S ribosomal subunit; part of the 5S rRNA/L5/L18/L25 subcomplex. Contacts the 5S rRNA and the P site tRNA. Forms a bridge to the 30S subunit in the 70S ribosome.

Functionally, this is one of the proteins that bind and probably mediate the attachment of the 5S RNA into the large ribosomal subunit, where it forms part of the central protuberance. In the 70S ribosome it contacts protein S13 of the 30S subunit (bridge B1b), connecting the 2 subunits; this bridge is implicated in subunit movement. Contacts the P site tRNA; the 5S rRNA and some of its associated proteins might help stabilize positioning of ribosome-bound tRNAs. This Aliivibrio fischeri (strain ATCC 700601 / ES114) (Vibrio fischeri) protein is Large ribosomal subunit protein uL5.